The chain runs to 434 residues: Homoserine dehydrogenase (434 aa).

Residues Thr-13 and Val-14 each contribute to the NADPH site. Residues Val-14, Ala-33, and Ala-43 each coordinate NAD(+). Residue Val-14 coordinates NADP(+). Arg-45 is a binding site for NADPH. NADP(+) contacts are provided by Arg-45, Arg-46, and Lys-103. Lys-103 provides a ligand contact to NADPH. Residues Glu-127, Val-130, Gly-132, and Ile-134 each coordinate Na(+). The NADP(+) site is built by Gly-185 and Glu-188. L-homoserine contacts are provided by Glu-188 and Asp-199. Catalysis depends on Lys-203, which acts as the Proton donor. Gly-300 contributes to the NADPH binding site. Gly-300 is a binding site for NAD(+). Residue Gly-300 participates in NADP(+) binding. One can recognise an ACT domain in the interval Tyr-353–Arg-429.

Belongs to the homoserine dehydrogenase family. A metal cation serves as cofactor.

The catalysed reaction is L-homoserine + NADP(+) = L-aspartate 4-semialdehyde + NADPH + H(+). It carries out the reaction L-homoserine + NAD(+) = L-aspartate 4-semialdehyde + NADH + H(+). It participates in amino-acid biosynthesis; L-methionine biosynthesis via de novo pathway; L-homoserine from L-aspartate: step 3/3. It functions in the pathway amino-acid biosynthesis; L-threonine biosynthesis; L-threonine from L-aspartate: step 3/5. With respect to regulation, feedback inhibition by threonine. Its function is as follows. Catalyzes the conversion of L-aspartate-beta-semialdehyde (L-Asa) to L-homoserine (L-Hse), the third step in the biosynthesis of threonine and methionine from aspartate. This is Homoserine dehydrogenase (hom) from Pseudomonas aeruginosa (strain ATCC 15692 / DSM 22644 / CIP 104116 / JCM 14847 / LMG 12228 / 1C / PRS 101 / PAO1).